A 762-amino-acid polypeptide reads, in one-letter code: 5-methyltetrahydropteroyltriglutamate--homocysteine methyltransferase (762 aa).

5-methyltetrahydropteroyltri-L-glutamate contacts are provided by residues 17-20 (REWK) and K111. L-homocysteine is bound by residues 435 to 437 (IGS) and E488. Residues 435-437 (IGS) and E488 each bind L-methionine. 5-methyltetrahydropteroyltri-L-glutamate contacts are provided by residues 519–520 (RC) and W565. D603 provides a ligand contact to L-homocysteine. D603 contributes to the L-methionine binding site. Position 609 (E609) interacts with 5-methyltetrahydropteroyltri-L-glutamate. Zn(2+) is bound by residues H645, C647, and E669. The Proton donor role is filled by H698. C730 serves as a coordination point for Zn(2+).

Belongs to the vitamin-B12 independent methionine synthase family. Requires Zn(2+) as cofactor.

The catalysed reaction is 5-methyltetrahydropteroyltri-L-glutamate + L-homocysteine = tetrahydropteroyltri-L-glutamate + L-methionine. It participates in amino-acid biosynthesis; L-methionine biosynthesis via de novo pathway; L-methionine from L-homocysteine (MetE route): step 1/1. Functionally, catalyzes the transfer of a methyl group from 5-methyltetrahydrofolate to homocysteine resulting in methionine formation. The sequence is that of 5-methyltetrahydropteroyltriglutamate--homocysteine methyltransferase from Bacillus thuringiensis (strain Al Hakam).